Here is a 465-residue protein sequence, read N- to C-terminus: Innexin-11 (465 aa).

4 helical membrane-spanning segments follow: residues 29–49 (LMTPNILLAFSVLISFKQFGG), 105–125 (QWVPFFLLLQAAFFRAPSYLW), 195–215 (SGFISWIYLFTKVLYFLNVFA), and 286–306 (IFVLLWFWYVILLLSSTVSLV). The segment at 433–465 (ISTSLMPDKDDIESSSTSSEEDQKRVSNVITNI) is disordered.

The protein belongs to the pannexin family.

The protein localises to the cell membrane. It is found in the cell junction. It localises to the gap junction. Structural component of the gap junctions. This chain is Innexin-11 (inx-11), found in Caenorhabditis elegans.